The primary structure comprises 64 residues: MARVCQITGKGPMVGNNVSHANNKTKRRFLPNLRTVRVTLEDGTTRKMRIAASTLRTLKKQNSK.

Belongs to the bacterial ribosomal protein bL28 family.

The sequence is that of Large ribosomal subunit protein bL28 from Campylobacter jejuni subsp. jejuni serotype O:6 (strain 81116 / NCTC 11828).